The chain runs to 322 residues: Fructose-1,6-bisphosphatase class 1 (322 aa).

Residues Glu-84, Asp-103, Leu-105, and Asp-106 each contribute to the Mg(2+) site. Residues 106 to 109 (DGSS), Asn-198, and Lys-264 each bind substrate. Glu-270 contributes to the Mg(2+) binding site.

Belongs to the FBPase class 1 family. In terms of assembly, homotetramer. The cofactor is Mg(2+).

It is found in the cytoplasm. The enzyme catalyses beta-D-fructose 1,6-bisphosphate + H2O = beta-D-fructose 6-phosphate + phosphate. It functions in the pathway carbohydrate biosynthesis; gluconeogenesis. This Saccharophagus degradans (strain 2-40 / ATCC 43961 / DSM 17024) protein is Fructose-1,6-bisphosphatase class 1.